The sequence spans 235 residues: 2,3-bisphosphoglycerate-dependent phosphoglycerate mutase 1 (235 aa).

Substrate contacts are provided by residues 8–15, 21–22, Arg-60, 87–90, Lys-98, and 114–115; these read RHGESVAN, TG, ERHY, and RR. Residue His-9 is the Tele-phosphohistidine intermediate of the active site. The active-site Proton donor/acceptor is the Glu-87.

The protein belongs to the phosphoglycerate mutase family. BPG-dependent PGAM subfamily.

The enzyme catalyses (2R)-2-phosphoglycerate = (2R)-3-phosphoglycerate. It participates in carbohydrate degradation; glycolysis; pyruvate from D-glyceraldehyde 3-phosphate: step 3/5. In terms of biological role, catalyzes the interconversion of 2-phosphoglycerate and 3-phosphoglycerate. This Latilactobacillus sakei subsp. sakei (strain 23K) (Lactobacillus sakei subsp. sakei) protein is 2,3-bisphosphoglycerate-dependent phosphoglycerate mutase 1.